A 150-amino-acid chain; its full sequence is Large ribosomal subunit protein bL9 (150 aa).

The protein belongs to the bacterial ribosomal protein bL9 family.

Functionally, binds to the 23S rRNA. The protein is Large ribosomal subunit protein bL9 of Corynebacterium aurimucosum (strain ATCC 700975 / DSM 44827 / CIP 107346 / CN-1) (Corynebacterium nigricans).